We begin with the raw amino-acid sequence, 163 residues long: Transcription antitermination protein NusB (163 aa).

It belongs to the NusB family.

Involved in transcription antitermination. Required for transcription of ribosomal RNA (rRNA) genes. Binds specifically to the boxA antiterminator sequence of the ribosomal RNA (rrn) operons. In Chlorobium luteolum (strain DSM 273 / BCRC 81028 / 2530) (Pelodictyon luteolum), this protein is Transcription antitermination protein NusB.